The following is a 419-amino-acid chain: L-rhamnose isomerase (419 aa).

Positions 262, 294, and 296 each coordinate Mn(2+).

The protein belongs to the rhamnose isomerase family. In terms of assembly, homotetramer. Mn(2+) is required as a cofactor.

The protein resides in the cytoplasm. The enzyme catalyses L-rhamnopyranose = L-rhamnulose. It participates in carbohydrate degradation; L-rhamnose degradation; glycerone phosphate from L-rhamnose: step 1/3. In terms of biological role, catalyzes the interconversion of L-rhamnose and L-rhamnulose. This Escherichia coli O45:K1 (strain S88 / ExPEC) protein is L-rhamnose isomerase.